Reading from the N-terminus, the 368-residue chain is MNALLEQKEQQERLREAAALGDIREVQKLVESGVDVNSQNEVNGWTCLHWACKRNHGQVVSYLLKSGADKEILTTKGEMPVQLTSRREIRKIMGVEEEDDDDDDDDNLPQLKKESELPFVPNYLANPAFPFIYTPTAEDSAQMQNGGPSTPPASPPADGSPPLLPPGEPPLLGTFPRDHTSLALVQNGDVSAPSAILRTPESTKPGPVCQPPVSQSRSLFSSVPSKPPMSLEPQNGTYAGPAPAFQPFFFTGAFPFNMQELVLKVRIQNPSLRENDFIEIELDRQELTYQELLRVCCCELGVNPDQVEKIRKLPNTLLRKDKDVARLQDFQELELVLMISENNFLFRNAASTLTERPCYNRRASKLTY.

Position 1 is an N-acetylmethionine (methionine 1). ANK repeat units lie at residues 9–38 (EQQERLREAAALGDIREVQKLVESGVDVNS) and 43–72 (NGWTCLHWACKRNHGQVVSYLLKSGADKEI). 3 disordered regions span residues 93–115 (MGVEEEDDDDDDDDNLPQLKKES), 139–176 (DSAQMQNGGPSTPPASPPADGSPPLLPPGEPPLLGTFP), and 196–238 (ILRT…NGTY). Positions 95 to 107 (VEEEDDDDDDDDN) are enriched in acidic residues. Residues 149 to 169 (STPPASPPADGSPPLLPPGEP) show a composition bias toward pro residues. A compositionally biased stretch (polar residues) spans 212-224 (PVSQSRSLFSSVP).

The sequence is that of Ankyrin repeat domain-containing protein 40 (ANKRD40) from Homo sapiens (Human).